We begin with the raw amino-acid sequence, 142 residues long: Peptide methionine sulfoxide reductase MsrB (142 aa).

The 124-residue stretch at 2-125 folds into the MsrB domain; the sequence is LKKDKSELTD…NSAAIQFIPY (124 aa). The Nucleophile role is filled by cysteine 114.

It belongs to the MsrB Met sulfoxide reductase family.

It catalyses the reaction L-methionyl-[protein] + [thioredoxin]-disulfide + H2O = L-methionyl-(R)-S-oxide-[protein] + [thioredoxin]-dithiol. This Staphylococcus aureus (strain Mu3 / ATCC 700698) protein is Peptide methionine sulfoxide reductase MsrB.